The sequence spans 251 residues: Capsid protein (251 aa).

A Bipartite nuclear localization signal motif is present at residues 3 to 20 (KRDAPWRSMAGTSKVSRN). The short motif at 35–49 (KAAAWVNRPMYRKPR) is the Nuclear localization signal element. The segment at 63 to 80 (CEGPCKVQSYEQRHDISH) is a zinc-finger region. A Nuclear export signal motif is present at residues 96–117 (ITHRVGKRFCVKSVYILGKIWM). Residues 195–242 (KRFWKVNNYVVYNHQEAGKYENHTENALLLYMACTHASNPVYATLKIR) carry the Bipartite nuclear localization signal motif.

Belongs to the geminiviridae capsid protein family. As to quaternary structure, homomultimer. Binds to single-stranded and double-stranded viral DNA. Interacts (via nuclear localization signals) with host importin alpha-1a.

It is found in the virion. It localises to the host nucleus. Functionally, encapsidates the viral DNA into characteristic twinned ('geminate') particles. Binds the genomic viral ssDNA and shuttles it into and out of the cell nucleus. The CP of bipartite geminiviruses is not required for cell-to-cell or systemic movement. In Cabbage leaf curl virus (isolate Jamaica) (CaLCuV), this protein is Capsid protein.